The primary structure comprises 59 residues: UPF0391 membrane protein lpp2589 (59 aa).

2 helical membrane-spanning segments follow: residues 5 to 25 (ALIF…GIAV) and 30 to 50 (IAKI…IMGL).

Belongs to the UPF0391 family.

The protein resides in the cell membrane. The polypeptide is UPF0391 membrane protein lpp2589 (Legionella pneumophila (strain Paris)).